We begin with the raw amino-acid sequence, 282 residues long: WRKY transcription factor 71 (282 aa).

Residues Leu63 to Glu121 form a disordered region. A compositionally biased stretch (low complexity) spans Ser65 to Asn75. The span at Gly77 to Gly99 shows a compositional bias: basic and acidic residues. Positions Ser130–Pro195 form a DNA-binding region, WRKY.

This sequence belongs to the WRKY group II-c family.

The protein localises to the nucleus. In terms of biological role, transcription factor. Interacts specifically with the W box (5'-(T)TGAC[CT]-3'), a frequently occurring elicitor-responsive cis-acting element. The sequence is that of WRKY transcription factor 71 (WRKY71) from Arabidopsis thaliana (Mouse-ear cress).